We begin with the raw amino-acid sequence, 388 residues long: MSVGMAAPRAPYSCDPDRSRGRLFAEPPSRTRSPFRRDCDRVIHSTAFRRLKHKTQVFVFHEGDHYRTRLTHSLEVAQIARALARQLGLDEDLTETLALAHDLGHPPFGHAGERALNRCMADHGGFDHNAQTLRIVTAFEQRYPDFDGLNLTWESLEGIVKHNGPLQGPVPAGIAEFNARFDLELWSYASLEAQVAALADDIAYDAHDIDDGLRAGLFTVDDLKEVPLLAAIIAEIDRHYPSLDDIRRGAELVRELISYLIAAVAGEAERRIEQAKPVSPHDVRRHAGPLVAFPADVAEHEATIKAFLWQRMYRHERVMRVMRDAERIVADLFGRYQQDGATLPAGWLDGCGGEGERARRISHFIAGMTDRFALTEHHRLFDSTPDLR.

The tract at residues 1 to 32 (MSVGMAAPRAPYSCDPDRSRGRLFAEPPSRTR) is disordered. An HD domain is found at 69–205 (RLTHSLEVAQ…AALADDIAYD (137 aa)).

This sequence belongs to the dGTPase family. Type 2 subfamily.

This is Deoxyguanosinetriphosphate triphosphohydrolase-like protein from Bradyrhizobium sp. (strain ORS 278).